We begin with the raw amino-acid sequence, 299 residues long: GTPase Era (299 aa).

Positions 4–171 (KSGFVAILGR…VDILSENLDE (168 aa)) constitute an Era-type G domain. Positions 12-19 (GRPNVGKS) are G1. 12–19 (GRPNVGKS) contacts GTP. A G2 region spans residues 38 to 42 (XTTRN). A G3 region spans residues 59–62 (DTPG). GTP is bound by residues 59–63 (DTPGI) and 121–124 (NKID). A G4 region spans residues 121–124 (NKID). The tract at residues 150 to 152 (ISA) is G5. In terms of domain architecture, KH type-2 spans 202–280 (TREEIPHSVA…FLETWVKVKK (79 aa)).

This sequence belongs to the TRAFAC class TrmE-Era-EngA-EngB-Septin-like GTPase superfamily. Era GTPase family. In terms of assembly, monomer.

It localises to the cytoplasm. It is found in the cell membrane. Its function is as follows. An essential GTPase that binds both GDP and GTP, with rapid nucleotide exchange. Plays a role in 16S rRNA processing and 30S ribosomal subunit biogenesis and possibly also in cell cycle regulation and energy metabolism. This chain is GTPase Era, found in Streptococcus pneumoniae serotype 19F (strain G54).